A 243-amino-acid polypeptide reads, in one-letter code: Large ribosomal subunit protein uL3 (243 aa).

Disordered regions lie at residues 139-164 (VSHR…KMPG) and 218-243 (KPGK…GEGA). At glutamine 151 the chain carries N5-methylglutamine. Residues 218–229 (KPGKFKLADGGD) are compositionally biased toward basic and acidic residues. Residues 230–243 (KAAAAPEATAGEGA) show a composition bias toward low complexity.

The protein belongs to the universal ribosomal protein uL3 family. In terms of assembly, part of the 50S ribosomal subunit. Forms a cluster with proteins L14 and L19. Post-translationally, methylated by PrmB.

In terms of biological role, one of the primary rRNA binding proteins, it binds directly near the 3'-end of the 23S rRNA, where it nucleates assembly of the 50S subunit. The polypeptide is Large ribosomal subunit protein uL3 (Afipia carboxidovorans (strain ATCC 49405 / DSM 1227 / KCTC 32145 / OM5) (Oligotropha carboxidovorans)).